The following is a 317-amino-acid chain: Tricarboxylate transport protein B, mitochondrial (317 aa).

A propeptide spans 1-20 (removed in mature form); the sequence is MSGSPKFVSPFHRPHCLSAA. Solcar repeat units follow at residues 29–117, 128–214, and 224–309; these read THPG…LSNQ, TRGL…LRNW, and INPV…VVKV. The next 4 membrane-spanning stretches (helical) occupy residues 35 to 55, 130 to 150, 223 to 243, and 294 to 314; these read ILAGGIAGGIEICITFPTEYV, GLICGLGAGVAEAVVVVCPME, SINPVVTGLFGAVAGAASVFG, and MDVAIVFIIYEEVVKVLNKVW.

It belongs to the mitochondrial carrier (TC 2.A.29) family. In terms of processing, possesses a short cleavable presequence, which, however, is found to be dispensable both for targeting to mitochondria and insertion into the inner membrane. However, the presequence is required to keep SLC25A1 in a soluble state and thus in an import-competent state. Mature SLC25A1 lacking the presequence is prone to aggregation.

It localises to the mitochondrion inner membrane. It catalyses the reaction (S)-malate(in) + citrate(out) = (S)-malate(out) + citrate(in). The enzyme catalyses D-threo-isocitrate(in) + citrate(out) = D-threo-isocitrate(out) + citrate(in). The catalysed reaction is citrate(out) + succinate(in) = citrate(in) + succinate(out). It carries out the reaction cis-aconitate(in) + citrate(out) = cis-aconitate(out) + citrate(in). It catalyses the reaction trans-aconitate(in) + citrate(out) = trans-aconitate(out) + citrate(in). The enzyme catalyses phosphoenolpyruvate(in) + citrate(out) = phosphoenolpyruvate(out) + citrate(in). The catalysed reaction is maleate(in) + citrate(out) = maleate(out) + citrate(in). In terms of biological role, mitochondrial electroneutral antiporter that exports citrate from the mitochondria into the cytosol in exchange for malate. Also able to mediate the exchange of citrate for isocitrate, phosphoenolpyruvate, cis-aconitate and to a lesser extent trans-aconitate, maleate and succinate. In the cytoplasm, citrate plays important roles in fatty acid and sterol synthesis, regulation of glycolysis, protein acetylation, and other physiopathological processes. This Danio rerio (Zebrafish) protein is Tricarboxylate transport protein B, mitochondrial.